The sequence spans 184 residues: Photosystem I assembly protein Ycf4 (184 aa).

A run of 2 helical transmembrane segments spans residues 22–42 (FCWA…GTSS) and 57–77 (IIFF…LFIS).

Belongs to the Ycf4 family.

It localises to the plastid. It is found in the chloroplast thylakoid membrane. Functionally, seems to be required for the assembly of the photosystem I complex. This is Photosystem I assembly protein Ycf4 from Capsella bursa-pastoris (Shepherd's purse).